A 61-amino-acid polypeptide reads, in one-letter code: Large ribosomal subunit protein uL30 (61 aa).

This sequence belongs to the universal ribosomal protein uL30 family. Part of the 50S ribosomal subunit.

The protein is Large ribosomal subunit protein uL30 of Caulobacter vibrioides (strain ATCC 19089 / CIP 103742 / CB 15) (Caulobacter crescentus).